The primary structure comprises 176 residues: NAD(P)H-quinone oxidoreductase subunit J (176 aa).

Belongs to the complex I 30 kDa subunit family. In terms of assembly, NDH-1 can be composed of about 15 different subunits; different subcomplexes with different compositions have been identified which probably have different functions.

The protein localises to the cellular thylakoid membrane. The catalysed reaction is a plastoquinone + NADH + (n+1) H(+)(in) = a plastoquinol + NAD(+) + n H(+)(out). The enzyme catalyses a plastoquinone + NADPH + (n+1) H(+)(in) = a plastoquinol + NADP(+) + n H(+)(out). In terms of biological role, NDH-1 shuttles electrons from an unknown electron donor, via FMN and iron-sulfur (Fe-S) centers, to quinones in the respiratory and/or the photosynthetic chain. The immediate electron acceptor for the enzyme in this species is believed to be plastoquinone. Couples the redox reaction to proton translocation, and thus conserves the redox energy in a proton gradient. Cyanobacterial NDH-1 also plays a role in inorganic carbon-concentration. In Nostoc punctiforme (strain ATCC 29133 / PCC 73102), this protein is NAD(P)H-quinone oxidoreductase subunit J.